Consider the following 104-residue polypeptide: Antitoxin HigA-2 (104 aa).

Positions 45–98 (IVSIREQFNMSRGVFARLLHTSSRTLENWEQGRSVPNGQAVTLLKLVQRHPETL) constitute an HTH cro/C1-type domain. A DNA-binding region (H-T-H motif) is located at residues 56–75 (RGVFARLLHTSSRTLENWEQ).

Its function is as follows. Antitoxin component of a type II toxin-antitoxin (TA) system that counteracts the effect of the HigB-2 toxin. Binds to its own promoter and regulates transcription of the higB-2/higA-2 operon. In Vibrio cholerae serotype O1 (strain ATCC 39315 / El Tor Inaba N16961), this protein is Antitoxin HigA-2 (higA-2).